We begin with the raw amino-acid sequence, 406 residues long: MADGNEDLRADDLPGPAFESYESMELACPAERSGHVAVSDGRHMFVWGGYKSNQVRGLYDFYLPREELWIYNMETGRWKKINTEGDVPPSMSGSCAVCVDRVLYLFGGHHSRGNTNKFYMLDSRSTDRVLQWERIDCQGIPPSSKDKLGVWVYKNKLIFFGGYGYLPEDKVLGTFEFDETSFWNSSHPRGWNDHVHILDTETFTWSQPITTGKAPSPRAAHACATVGNRGFVFGGRYRDARMNDLHYLNLDTWEWNELIPQGICPVGRSWHSLTPVSSDHLFLFGGFTTDKQPLSDAWTYCISKNEWIQFNHPYTEKPRLWHTACASDEGEVIVFGGCANNLLVHHRAAHSNEILIFSVQPKSLVRLSLEAVICFKEMLANSWNCLPKHLLHSVNQRFGSNNTSGS.

Kelch repeat units lie at residues 31–85 (ERSG…NTEG), 92–136 (SGSC…ERID), 148–207 (LGVW…TWSQ), 221–259 (HACA…NELI), 271–311 (HSLT…IQFN), and 322–359 (HTAC…IFSV).

In terms of assembly, component of a CRL2(KLHDC2) E3 ubiquitin-protein ligase complex, also named ECS(KLHDC2) complex, composed of CUL2, Elongin BC (ELOB and ELOC), RBX1 and substrate-specific adapter KLHDC2. May form oligomers as a KLHDC2-ELOB-ELOC complex; this interaction is autoinhibitory for the E3 ligase complex as the substrate-binding site of KLHDC2 is blocked in the oligomer. Interacts with CREB3; interaction is direct and specific as it does not interact with CREB1, ATF4, ATF6, JUN, FOS, CEBPA or herpes simplex virus transactivator VP16. In terms of processing, autoubiquitinated by the CRL2(KLHDC2) E3 ligase complex. Widely expressed, with high levels in skeletal muscle, heart, pancreas and liver. Undetectable in peripheral blood leukocytes.

It is found in the nucleus. It functions in the pathway protein modification; protein ubiquitination. In terms of biological role, substrate-recognition component of a Cul2-RING (CRL2) E3 ubiquitin-protein ligase complex of the DesCEND (destruction via C-end degrons) pathway, which recognizes a C-degron located at the extreme C terminus of target proteins, leading to their ubiquitination and degradation. The C-degron recognized by the DesCEND pathway is usually a motif of less than ten residues and can be present in full-length proteins, truncated proteins or proteolytically cleaved forms. The CRL2(KLHDC2) complex specifically recognizes proteins with a diglycine (Gly-Gly) at the C-terminus, leading to their ubiquitination and degradation. The CRL2(KLHDC2) complex mediates ubiquitination and degradation of truncated SELENOK and SELENOS selenoproteins produced by failed UGA/Sec decoding, which end with a diglycine. The CRL2(KLHDC2) complex also recognizes proteolytically cleaved proteins ending with Gly-Gly, such as the N-terminal fragment of USP1, leading to their degradation. May also act as an indirect repressor of CREB3-mediated transcription by interfering with CREB3-DNA-binding. This chain is Kelch domain-containing protein 2, found in Homo sapiens (Human).